The chain runs to 381 residues: Dual-specificity RNA methyltransferase RlmN (381 aa).

Glutamate 96 serves as the catalytic Proton acceptor. Positions 102 to 342 (TDDRGTLCVS…TRTTRGDDID (241 aa)) constitute a Radical SAM core domain. Cysteine 109 and cysteine 345 are oxidised to a cystine. Residues cysteine 116, cysteine 120, and cysteine 123 each coordinate [4Fe-4S] cluster. Residues 170-171 (GE), serine 202, 224-226 (SLH), and asparagine 302 contribute to the S-adenosyl-L-methionine site. Residue cysteine 345 is the S-methylcysteine intermediate of the active site.

It belongs to the radical SAM superfamily. RlmN family. It depends on [4Fe-4S] cluster as a cofactor.

It is found in the cytoplasm. It carries out the reaction adenosine(2503) in 23S rRNA + 2 reduced [2Fe-2S]-[ferredoxin] + 2 S-adenosyl-L-methionine = 2-methyladenosine(2503) in 23S rRNA + 5'-deoxyadenosine + L-methionine + 2 oxidized [2Fe-2S]-[ferredoxin] + S-adenosyl-L-homocysteine. The enzyme catalyses adenosine(37) in tRNA + 2 reduced [2Fe-2S]-[ferredoxin] + 2 S-adenosyl-L-methionine = 2-methyladenosine(37) in tRNA + 5'-deoxyadenosine + L-methionine + 2 oxidized [2Fe-2S]-[ferredoxin] + S-adenosyl-L-homocysteine. Functionally, specifically methylates position 2 of adenine 2503 in 23S rRNA and position 2 of adenine 37 in tRNAs. m2A2503 modification seems to play a crucial role in the proofreading step occurring at the peptidyl transferase center and thus would serve to optimize ribosomal fidelity. This chain is Dual-specificity RNA methyltransferase RlmN, found in Pseudomonas putida (strain ATCC 700007 / DSM 6899 / JCM 31910 / BCRC 17059 / LMG 24140 / F1).